The chain runs to 245 residues: MKRVAAVIEYDGSNFFGYQGQPDVRTVQGVIEDALERIFKQRIYTQAAGRTDTGVHANGQLIAFNCPNDRMTTEDIRNAMNANLPDDVYVKEVFEVPVNFHPRFDVTKRIYHYFILTSRQKNVFLRKYVWWFPYELDLDAMRKAVKYLEGTHDFTSFKTGSDERDPVRTIYRIRILRLKNDLVLIRVEGRSFLRRMVRNIVAALVKVGLKQWEPEKMKEVLEARDRSAAAGTAPAHGLYFYKVLF.

The Nucleophile role is filled by Asp-52. Tyr-111 provides a ligand contact to substrate.

Belongs to the tRNA pseudouridine synthase TruA family. As to quaternary structure, homodimer.

The catalysed reaction is uridine(38/39/40) in tRNA = pseudouridine(38/39/40) in tRNA. In terms of biological role, formation of pseudouridine at positions 38, 39 and 40 in the anticodon stem and loop of transfer RNAs. The chain is tRNA pseudouridine synthase A from Thermotoga maritima (strain ATCC 43589 / DSM 3109 / JCM 10099 / NBRC 100826 / MSB8).